The following is a 378-amino-acid chain: tRNA (guanine(26)-N(2))-dimethyltransferase (378 aa).

The region spanning 4–374 (KEVTEGKVRI…KGYEEIIRCV (371 aa)) is the Trm1 methyltransferase domain. Arginine 44, arginine 69, aspartate 87, aspartate 114, and alanine 115 together coordinate S-adenosyl-L-methionine. Residues cysteine 246, cysteine 249, cysteine 263, and cysteine 266 each contribute to the Zn(2+) site.

This sequence belongs to the class I-like SAM-binding methyltransferase superfamily. Trm1 family.

It catalyses the reaction guanosine(26) in tRNA + 2 S-adenosyl-L-methionine = N(2)-dimethylguanosine(26) in tRNA + 2 S-adenosyl-L-homocysteine + 2 H(+). Its function is as follows. Dimethylates a single guanine residue at position 26 of a number of tRNAs using S-adenosyl-L-methionine as donor of the methyl groups. In Saccharolobus islandicus (strain M.14.25 / Kamchatka #1) (Sulfolobus islandicus), this protein is tRNA (guanine(26)-N(2))-dimethyltransferase.